Reading from the N-terminus, the 256-residue chain is 1-(5-phosphoribosyl)-5-[(5-phosphoribosylamino)methylideneamino] imidazole-4-carboxamide isomerase (256 aa).

Catalysis depends on aspartate 8, which acts as the Proton acceptor. The active-site Proton donor is the aspartate 129.

It belongs to the HisA/HisF family.

It localises to the cytoplasm. It catalyses the reaction 1-(5-phospho-beta-D-ribosyl)-5-[(5-phospho-beta-D-ribosylamino)methylideneamino]imidazole-4-carboxamide = 5-[(5-phospho-1-deoxy-D-ribulos-1-ylimino)methylamino]-1-(5-phospho-beta-D-ribosyl)imidazole-4-carboxamide. It functions in the pathway amino-acid biosynthesis; L-histidine biosynthesis; L-histidine from 5-phospho-alpha-D-ribose 1-diphosphate: step 4/9. This chain is 1-(5-phosphoribosyl)-5-[(5-phosphoribosylamino)methylideneamino] imidazole-4-carboxamide isomerase, found in Synechococcus sp. (strain WH7803).